A 425-amino-acid chain; its full sequence is Enolase (425 aa).

(2R)-2-phosphoglycerate is bound at residue Q163. Catalysis depends on E205, which acts as the Proton donor. Residues D242, E286, and D313 each coordinate Mg(2+). Residues K338, R367, S368, and K389 each coordinate (2R)-2-phosphoglycerate. Residue K338 is the Proton acceptor of the active site.

The protein belongs to the enolase family. Requires Mg(2+) as cofactor.

The protein localises to the cytoplasm. Its subcellular location is the secreted. The protein resides in the cell surface. It carries out the reaction (2R)-2-phosphoglycerate = phosphoenolpyruvate + H2O. It participates in carbohydrate degradation; glycolysis; pyruvate from D-glyceraldehyde 3-phosphate: step 4/5. Its function is as follows. Catalyzes the reversible conversion of 2-phosphoglycerate (2-PG) into phosphoenolpyruvate (PEP). It is essential for the degradation of carbohydrates via glycolysis. The polypeptide is Enolase (Lactobacillus delbrueckii subsp. bulgaricus (strain ATCC 11842 / DSM 20081 / BCRC 10696 / JCM 1002 / NBRC 13953 / NCIMB 11778 / NCTC 12712 / WDCM 00102 / Lb 14)).